A 271-amino-acid chain; its full sequence is Ferric vulnibactin reductase VuuB (271 aa).

Residues 8 to 131 (VYPMLLDFVR…IGPAGPDPLI (124 aa)) enclose the FAD-binding FR-type domain.

Belongs to the SIP oxidoreductase family. As to quaternary structure, monomer. FAD is required as a cofactor.

The protein resides in the cytoplasm. The enzyme catalyses 2 a Fe(II)-siderophore + NAD(+) + H(+) = 2 a Fe(III)-siderophore + NADH. In terms of biological role, ferric-siderophore reductase involved in iron removal from the siderophores after their transport into the cell. Acts as a major ferric-vulnibactin reductase catalyzing the reduction of Fe(3+)-vulnibactin, a catecholate siderophore synthesized by V.vulnificus. In Vibrio vulnificus (strain CMCP6), this protein is Ferric vulnibactin reductase VuuB.